The chain runs to 758 residues: 5-methyltetrahydropteroyltriglutamate--homocysteine methyltransferase (758 aa).

5-methyltetrahydropteroyltri-L-glutamate-binding positions include 16 to 19 (RELK) and lysine 112. Residues 433–435 (IGS) and glutamate 486 contribute to the L-homocysteine site. Residues 433–435 (IGS) and glutamate 486 contribute to the L-methionine site. 5-methyltetrahydropteroyltri-L-glutamate is bound by residues 517–518 (RC) and tryptophan 563. L-homocysteine is bound at residue aspartate 601. L-methionine is bound at residue aspartate 601. Glutamate 607 lines the 5-methyltetrahydropteroyltri-L-glutamate pocket. Residues histidine 643, cysteine 645, and glutamate 667 each coordinate Zn(2+). The active-site Proton donor is histidine 696. Residue cysteine 728 participates in Zn(2+) binding.

Belongs to the vitamin-B12 independent methionine synthase family. Zn(2+) serves as cofactor.

The catalysed reaction is 5-methyltetrahydropteroyltri-L-glutamate + L-homocysteine = tetrahydropteroyltri-L-glutamate + L-methionine. It functions in the pathway amino-acid biosynthesis; L-methionine biosynthesis via de novo pathway; L-methionine from L-homocysteine (MetE route): step 1/1. Its function is as follows. Catalyzes the transfer of a methyl group from 5-methyltetrahydrofolate to homocysteine resulting in methionine formation. The chain is 5-methyltetrahydropteroyltriglutamate--homocysteine methyltransferase from Neisseria meningitidis serogroup A / serotype 4A (strain DSM 15465 / Z2491).